Consider the following 545-residue polypeptide: Gamma-curcumene synthase (545 aa).

Residues aspartate 299, aspartate 303, asparagine 442, and glutamate 450 each contribute to the Mg(2+) site. The DDXXD motif motif lies at 299 to 303; it reads DDTYD.

This sequence belongs to the terpene synthase family. Requires Mg(2+) as cofactor.

The protein resides in the cytoplasm. Its subcellular location is the cytosol. It catalyses the reaction (2E,6E)-farnesyl diphosphate = gamma-curcumene + diphosphate. It participates in secondary metabolite biosynthesis; terpenoid biosynthesis. Functionally, sesquiterpene synthase involved in gamma-curcumene biosynthesis. The chain is Gamma-curcumene synthase from Pogostemon cablin (Patchouli).